The primary structure comprises 154 residues: UPF0547 protein C16orf87 homolog (154 aa).

The tract at residues 43-119 (NAKHSEKSPP…KHEEEREKQE (77 aa)) is disordered. Residues 68–84 (VRREKINSTVNKDLENR) show a composition bias toward basic and acidic residues. Residue Ser91 is modified to Phosphoserine. Residues 104 to 132 (KSSSAKKHEEEREKQEKEIDIYANLSDEK) are a coiled coil. Residues 109 to 119 (KKHEEEREKQE) are compositionally biased toward basic and acidic residues.

It belongs to the UPF0547 family.

The polypeptide is UPF0547 protein C16orf87 homolog (Mus musculus (Mouse)).